Consider the following 368-residue polypeptide: Peptide chain release factor 2 (368 aa).

Glutamine 250 carries the post-translational modification N5-methylglutamine.

Belongs to the prokaryotic/mitochondrial release factor family. Methylated by PrmC. Methylation increases the termination efficiency of RF2.

It localises to the cytoplasm. Its function is as follows. Peptide chain release factor 2 directs the termination of translation in response to the peptide chain termination codons UGA and UAA. In Mycolicibacterium vanbaalenii (strain DSM 7251 / JCM 13017 / BCRC 16820 / KCTC 9966 / NRRL B-24157 / PYR-1) (Mycobacterium vanbaalenii), this protein is Peptide chain release factor 2.